A 148-amino-acid polypeptide reads, in one-letter code: Transcriptional regulator MraZ (148 aa).

SpoVT-AbrB domains are found at residues 5 to 51 (AAAL…PSPA) and 80 to 123 (ARTE…SEAG).

Belongs to the MraZ family. Forms oligomers.

Its subcellular location is the cytoplasm. The protein localises to the nucleoid. The sequence is that of Transcriptional regulator MraZ from Dechloromonas aromatica (strain RCB).